A 506-amino-acid chain; its full sequence is MAEKNYVMAIDQGTTSSRAIIFDRNGKKIGSSQKEFPQYFPKSGWVEHNANEIWNSVQSVIAGAFIESGIRPEAIAGIGITNQRETTVVWDKTTGQPIANAIVWQSRQSSPIADQLKVDGHTEMIHEKTGLVIDAYFSATKVRWLLDNIEGAQEKADNGELLFGTIDSWLVWKLTDGQVHVTDYSNASRTMLYNIHKLEWDQEILDLLNIPSSMLPEVKSNSEVYGHTRSYHFYGSEVPIAGMAGDQQAALFGQMAFEKGMIKNTYGTGAFIVMNTGEEPQLSDNDLLTTIGYGINGKVYYALEGSIFVAGSAIQWLRDGLRMIETSPQSEELAAKAKGDNEVYVVPAFTGLGAPYWDSEARGAVFGLTRGTTKEDFVRATLQAVAYQSKDVIDTMKKDSGIDIPLLKVDGGAAKNDLLMQFQADILDIDVQRAANLETTALGAAYLAGLAVGFWKDLDELKSMAEEGQMFTPEMPAEERDNLYEGWKQAVAATQTFKFKAKKEGE.

Thr-14 lines the ADP pocket. ATP contacts are provided by Thr-14, Thr-15, and Ser-16. Thr-14 contacts sn-glycerol 3-phosphate. Position 18 (Arg-18) interacts with ADP. Sn-glycerol 3-phosphate is bound by residues Arg-84, Glu-85, and Tyr-136. Positions 84, 85, and 136 each coordinate glycerol. His-232 carries the post-translational modification Phosphohistidine; by HPr. Sn-glycerol 3-phosphate is bound at residue Asp-246. Glycerol-binding residues include Asp-246 and Gln-247. Positions 268 and 311 each coordinate ADP. Residues Thr-268, Gly-311, Gln-315, and Gly-412 each coordinate ATP. 2 residues coordinate ADP: Gly-412 and Asn-416.

The protein belongs to the FGGY kinase family. In terms of assembly, homotetramer and homodimer (in equilibrium). The phosphoenolpyruvate-dependent sugar phosphotransferase system (PTS), including enzyme I, and histidine-containing protein (HPr) are required for the phosphorylation of His-232, which leads to the activation of the enzyme.

The catalysed reaction is glycerol + ATP = sn-glycerol 3-phosphate + ADP + H(+). The protein operates within polyol metabolism; glycerol degradation via glycerol kinase pathway; sn-glycerol 3-phosphate from glycerol: step 1/1. With respect to regulation, activated by phosphorylation and inhibited by fructose 1,6-bisphosphate (FBP). Its function is as follows. Key enzyme in the regulation of glycerol uptake and metabolism. Catalyzes the phosphorylation of glycerol to yield sn-glycerol 3-phosphate. This is Glycerol kinase from Enterococcus casseliflavus (Enterococcus flavescens).